A 192-amino-acid polypeptide reads, in one-letter code: Ion-translocating oxidoreductase complex subunit B (192 aa).

The segment at 1 to 26 is hydrophobic; the sequence is MNAIWIAVAAVSLLGLAFGAILGYAS. One can recognise a 4Fe-4S domain in the interval 32-91; it reads EDDPVVEKIDEILPQSQCGQCGYPGCRPYAEAISCNGEKINRCAPGGEAVMLKIAELLNV. [4Fe-4S] cluster contacts are provided by cysteine 49, cysteine 52, cysteine 57, cysteine 74, cysteine 117, cysteine 120, cysteine 123, cysteine 127, cysteine 147, cysteine 150, cysteine 153, and cysteine 157. 2 4Fe-4S ferredoxin-type domains span residues 108-137 and 138-167; these read MVAV…GATR and AMHT…LQPV.

Belongs to the 4Fe4S bacterial-type ferredoxin family. RnfB subfamily. As to quaternary structure, the complex is composed of six subunits: RsxA, RsxB, RsxC, RsxD, RsxE and RsxG. [4Fe-4S] cluster is required as a cofactor.

It localises to the cell inner membrane. Its function is as follows. Part of a membrane-bound complex that couples electron transfer with translocation of ions across the membrane. Required to maintain the reduced state of SoxR. The sequence is that of Ion-translocating oxidoreductase complex subunit B from Escherichia coli O8 (strain IAI1).